We begin with the raw amino-acid sequence, 242 residues long: UPF0309 protein BAbS19_II03080 (242 aa).

The SIS domain maps to 30–214; sequence AADLIAAAAR…ARLVGEGDAP (185 aa).

Belongs to the UPF0309 family.

The chain is UPF0309 protein BAbS19_II03080 from Brucella abortus (strain S19).